The following is a 328-amino-acid chain: Cytochrome f (328 aa).

The N-terminal stretch at 1–44 is a signal peptide; it reads MRTFNFLSFPQVHRQALVKAVLVAIATVSLLLTSDVINPQSAQA. 4 residues coordinate heme: Tyr45, Cys66, Cys69, and His70. Residues 294-314 traverse the membrane as a helical segment; sequence IKGLVLFLGGIMLCQILLVIK.

The protein belongs to the cytochrome f family. In terms of assembly, the 4 large subunits of the cytochrome b6-f complex are cytochrome b6, subunit IV (17 kDa polypeptide, PetD), cytochrome f and the Rieske protein, while the 4 small subunits are PetG, PetL, PetM and PetN. The complex functions as a dimer. Heme is required as a cofactor.

The protein localises to the cellular thylakoid membrane. Its function is as follows. Component of the cytochrome b6-f complex, which mediates electron transfer between photosystem II (PSII) and photosystem I (PSI), cyclic electron flow around PSI, and state transitions. The chain is Cytochrome f from Microcystis aeruginosa (strain NIES-843 / IAM M-2473).